Here is a 205-residue protein sequence, read N- to C-terminus: Holliday junction branch migration complex subunit RuvA (205 aa).

Residues 1-62 are domain I; it reads MFEYVTGYVE…EDIMALYGFK (62 aa). A domain II region spans residues 63 to 141; it reads TREERLLFTK…DVVPDAFVDL (79 aa). A flexible linker region spans residues 142–152; that stretch reads FSDTERFDEKK. The segment at 153–205 is domain III; that stretch reads GTSAELDEALEALRALGYAEREVSRVVPELLKESLTTDQYIKKALSLLLNGKR.

Belongs to the RuvA family. Homotetramer. Forms an RuvA(8)-RuvB(12)-Holliday junction (HJ) complex. HJ DNA is sandwiched between 2 RuvA tetramers; dsDNA enters through RuvA and exits via RuvB. An RuvB hexamer assembles on each DNA strand where it exits the tetramer. Each RuvB hexamer is contacted by two RuvA subunits (via domain III) on 2 adjacent RuvB subunits; this complex drives branch migration. In the full resolvosome a probable DNA-RuvA(4)-RuvB(12)-RuvC(2) complex forms which resolves the HJ.

It is found in the cytoplasm. Its function is as follows. The RuvA-RuvB-RuvC complex processes Holliday junction (HJ) DNA during genetic recombination and DNA repair, while the RuvA-RuvB complex plays an important role in the rescue of blocked DNA replication forks via replication fork reversal (RFR). RuvA specifically binds to HJ cruciform DNA, conferring on it an open structure. The RuvB hexamer acts as an ATP-dependent pump, pulling dsDNA into and through the RuvAB complex. HJ branch migration allows RuvC to scan DNA until it finds its consensus sequence, where it cleaves and resolves the cruciform DNA. The protein is Holliday junction branch migration complex subunit RuvA of Bacillus cereus (strain G9842).